The sequence spans 720 residues: MNHQNLLVELFVEELPPKALQKLGDAFAGVLLEQLQAQGLTSAHSQLTAFASPRRLAAHITEVLPAAADKAVSQKLMPVAVGLDASGQPTPALLKKLTALGADAASVPQLKRVHDGKAEVLFFESMAKGALLADGLQKALDEAIAKLPIPKVMRYQLQDGWTSVHFVRPAHGLVALHGTQVLVGVQALGLTAGNTTHGHRFEASVDPVVIQSADSYAEQLRSEGAVIASFAERRAEIARQLQAAADRVGGGVRPIEDAALLDEVTALVERPNVLVCEFEKEFLAVPQECLILTMKANQKYFPLLDAEGKLTHQFLVVSNISPQDASAVIQGNERVVRPRLADAKFFFDQDRKKTLVSRVDQLAKVVYHNKLGTQGERVERVRHIAKAIATQLFTALAQGNAALDSQEGEIAQDYLLTCVDNAALLAKTDLVTDMVGEFPELQGIMGGYYAVSDGLPDEVAHAIEDHYKPRFAGDALPRENVGVVVALADKLETLVGMFGIGNLPTGDRDPFALRRHALGVIRMLVEKELPLDLDALLASAVPAFGDKIEDTSAQLADFIYDRLAGSLREQGYSAQEVDAVIALRPQRLALVPRQLEAVRAFTQLEEAPALAAANKRVTNILKKAGEVDPHVNEELLQEPAEKDLYAALQRFVPEANAQFDSGDYTASLQTLAVLRAPVDAFFDDVMVNAEELALRLNRQGLLKKLHMAMNRVADLSRLAV.

The protein belongs to the class-II aminoacyl-tRNA synthetase family. Tetramer of two alpha and two beta subunits.

The protein localises to the cytoplasm. The enzyme catalyses tRNA(Gly) + glycine + ATP = glycyl-tRNA(Gly) + AMP + diphosphate. In Acidovorax sp. (strain JS42), this protein is Glycine--tRNA ligase beta subunit.